The sequence spans 273 residues: Shikimate dehydrogenase (NADP(+)) (273 aa).

Shikimate-binding positions include 14 to 16 (SKS) and Thr-61. Catalysis depends on Lys-65, which acts as the Proton acceptor. Glu-77 contributes to the NADP(+) binding site. Shikimate is bound by residues Asn-86 and Asp-102. Residues 126–130 (GAGGA), 150–155 (NRTYEK), and Met-213 contribute to the NADP(+) site. Tyr-215 is a binding site for shikimate. Gly-237 provides a ligand contact to NADP(+).

Belongs to the shikimate dehydrogenase family. In terms of assembly, homodimer.

It carries out the reaction shikimate + NADP(+) = 3-dehydroshikimate + NADPH + H(+). It participates in metabolic intermediate biosynthesis; chorismate biosynthesis; chorismate from D-erythrose 4-phosphate and phosphoenolpyruvate: step 4/7. Its function is as follows. Involved in the biosynthesis of the chorismate, which leads to the biosynthesis of aromatic amino acids. Catalyzes the reversible NADPH linked reduction of 3-dehydroshikimate (DHSA) to yield shikimate (SA). The sequence is that of Shikimate dehydrogenase (NADP(+)) from Aliivibrio fischeri (strain MJ11) (Vibrio fischeri).